Here is a 493-residue protein sequence, read N- to C-terminus: Exosome complex component Rrp41 (493 aa).

Disordered regions lie at residues 244-264 (VSEE…PSPV) and 291-493 (LASE…EKDE). Residues 249–259 (APEKGAEKEVL) show a composition bias toward basic and acidic residues. Residues 297 to 377 (PDFEDELEEE…ALEEETELEA (81 aa)) show a composition bias toward acidic residues. Positions 383–400 (PELKEFDEIEARLEKEDA) are enriched in basic and acidic residues. Over residues 401 to 471 (SIEAEEEIEP…EAEEEPEEEK (71 aa)) the composition is skewed to acidic residues. The span at 472-493 (SEGPWKVVKDPSEAGTRGEKDE) shows a compositional bias: basic and acidic residues.

This sequence belongs to the RNase PH family. Rrp41 subfamily. Component of the archaeal exosome complex. Forms a hexameric ring-like arrangement composed of 3 Rrp41-Rrp42 heterodimers. The hexameric ring associates with a trimer of Rrp4 and/or Csl4 subunits.

The protein resides in the cytoplasm. Functionally, catalytic component of the exosome, which is a complex involved in RNA degradation. Has 3'-&gt;5' exoribonuclease activity. Can also synthesize heteromeric RNA-tails. The chain is Exosome complex component Rrp41 from Methanosarcina mazei (strain ATCC BAA-159 / DSM 3647 / Goe1 / Go1 / JCM 11833 / OCM 88) (Methanosarcina frisia).